The sequence spans 209 residues: NADH-ubiquinone oxidoreductase subunit 9 (209 aa).

It belongs to the complex I 30 kDa subunit family. Complex I is composed of about 30 different subunits.

It localises to the mitochondrion inner membrane. The enzyme catalyses a ubiquinone + NADH + 5 H(+)(in) = a ubiquinol + NAD(+) + 4 H(+)(out). Functionally, core subunit of the mitochondrial membrane respiratory chain NADH dehydrogenase (Complex I) that is believed to belong to the minimal assembly required for catalysis. Complex I functions in the transfer of electrons from NADH to the respiratory chain. The immediate electron acceptor for the enzyme is believed to be ubiquinone. In Dictyostelium citrinum (Slime mold), this protein is NADH-ubiquinone oxidoreductase subunit 9 (nad9).